We begin with the raw amino-acid sequence, 461 residues long: Trigger factor (461 aa).

The PPIase FKBP-type domain maps to 166–245; the sequence is GDFANIDLTA…VNSVKAEELP (80 aa).

It belongs to the FKBP-type PPIase family. Tig subfamily.

It localises to the cytoplasm. It catalyses the reaction [protein]-peptidylproline (omega=180) = [protein]-peptidylproline (omega=0). In terms of biological role, involved in protein export. Acts as a chaperone by maintaining the newly synthesized protein in an open conformation. Functions as a peptidyl-prolyl cis-trans isomerase. In Bifidobacterium animalis subsp. lactis (strain AD011), this protein is Trigger factor.